A 79-amino-acid polypeptide reads, in one-letter code: MKYVALAFVLSLVILQISAQGGGLTSLLLQKEYMPDSWFDYKLAQMILGGPTGRKSRTQSGRNQRKSNSDSWLWLALAN.

The N-terminal stretch at 1-19 (MKYVALAFVLSLVILQISA) is a signal peptide.

As to expression, nacreous layer of shell (at protein level). Expressed primarily in the mantle with highest level in the mantle pallium and lower level in the mantle edge.

The protein resides in the secreted. This is an uncharacterized protein from Pinctada maxima (Silver-lipped pearl oyster).